The chain runs to 203 residues: MAEKLKGTTTVGIVCKDGVVLAADRRASLGNMVLSKEVTKVFQIDDHLALAGAGSVGDILSLVRLLRAEVKLYRAKVGREISVKALATLTSNILHGSRFMPYFGWFLIAGYDEKPALYSLDMAGGVTEDKFTAAGSGMELAFAVLEDGYKDDINVEEGVKLALKAIKIATRRDVFTGDGITLVTVTEEGYRELNREEIEALLK.

A propeptide spans 1–7 (MAEKLKG) (removed in mature form; by autocatalysis). Threonine 8 serves as the catalytic Nucleophile.

The protein belongs to the peptidase T1B family. The 20S proteasome core is composed of 14 alpha and 14 beta subunits that assemble into four stacked heptameric rings, resulting in a barrel-shaped structure. The two inner rings, each composed of seven catalytic beta subunits, are sandwiched by two outer rings, each composed of seven alpha subunits. The catalytic chamber with the active sites is on the inside of the barrel. Has a gated structure, the ends of the cylinder being occluded by the N-termini of the alpha-subunits. Is capped at one or both ends by the proteasome regulatory ATPase, PAN.

It localises to the cytoplasm. The catalysed reaction is Cleavage of peptide bonds with very broad specificity.. Its activity is regulated as follows. The formation of the proteasomal ATPase PAN-20S proteasome complex, via the docking of the C-termini of PAN into the intersubunit pockets in the alpha-rings, triggers opening of the gate for substrate entry. Interconversion between the open-gate and close-gate conformations leads to a dynamic regulation of the 20S proteasome proteolysis activity. Its function is as follows. Component of the proteasome core, a large protease complex with broad specificity involved in protein degradation. The polypeptide is Proteasome subunit beta 1 (Thermococcus onnurineus (strain NA1)).